The following is a 385-amino-acid chain: Putative F-box protein At1g49610 (385 aa).

The region spanning 25-73 (VDSISSLPDVILQENLSLIPTKFAIRTSVLSKRWRHVWSETPSLDFDDC) is the F-box domain.

This is Putative F-box protein At1g49610 from Arabidopsis thaliana (Mouse-ear cress).